The following is a 332-amino-acid chain: Ketol-acid reductoisomerase (NADP(+)) (332 aa).

The 182-residue stretch at methionine 1–threonine 182 folds into the KARI N-terminal Rossmann domain. NADP(+)-binding positions include tyrosine 25–glutamine 28 and aspartate 83–glutamine 86. Residue histidine 108 is part of the active site. Residue glycine 134 participates in NADP(+) binding. A KARI C-terminal knotted domain is found at threonine 183–leucine 328. The Mg(2+) site is built by aspartate 191, glutamate 195, glutamate 227, and glutamate 231. Substrate is bound at residue serine 252.

Belongs to the ketol-acid reductoisomerase family. The cofactor is Mg(2+).

It carries out the reaction (2R)-2,3-dihydroxy-3-methylbutanoate + NADP(+) = (2S)-2-acetolactate + NADPH + H(+). The enzyme catalyses (2R,3R)-2,3-dihydroxy-3-methylpentanoate + NADP(+) = (S)-2-ethyl-2-hydroxy-3-oxobutanoate + NADPH + H(+). It participates in amino-acid biosynthesis; L-isoleucine biosynthesis; L-isoleucine from 2-oxobutanoate: step 2/4. The protein operates within amino-acid biosynthesis; L-valine biosynthesis; L-valine from pyruvate: step 2/4. Functionally, involved in the biosynthesis of branched-chain amino acids (BCAA). Catalyzes an alkyl-migration followed by a ketol-acid reduction of (S)-2-acetolactate (S2AL) to yield (R)-2,3-dihydroxy-isovalerate. In the isomerase reaction, S2AL is rearranged via a Mg-dependent methyl migration to produce 3-hydroxy-3-methyl-2-ketobutyrate (HMKB). In the reductase reaction, this 2-ketoacid undergoes a metal-dependent reduction by NADPH to yield (R)-2,3-dihydroxy-isovalerate. This chain is Ketol-acid reductoisomerase (NADP(+)), found in Dehalococcoides mccartyi (strain ATCC BAA-2266 / KCTC 15142 / 195) (Dehalococcoides ethenogenes (strain 195)).